We begin with the raw amino-acid sequence, 203 residues long: dITP/XTP pyrophosphatase (203 aa).

15–20 (SGNAGK) contacts substrate. Mg(2+)-binding residues include E45 and D74. D74 functions as the Proton acceptor in the catalytic mechanism. Substrate contacts are provided by residues S75, 153-156 (FGYD), K176, and 181-182 (HR).

This sequence belongs to the HAM1 NTPase family. As to quaternary structure, homodimer. Requires Mg(2+) as cofactor.

The enzyme catalyses XTP + H2O = XMP + diphosphate + H(+). It catalyses the reaction dITP + H2O = dIMP + diphosphate + H(+). It carries out the reaction ITP + H2O = IMP + diphosphate + H(+). In terms of biological role, pyrophosphatase that catalyzes the hydrolysis of nucleoside triphosphates to their monophosphate derivatives, with a high preference for the non-canonical purine nucleotides XTP (xanthosine triphosphate), dITP (deoxyinosine triphosphate) and ITP. Seems to function as a house-cleaning enzyme that removes non-canonical purine nucleotides from the nucleotide pool, thus preventing their incorporation into DNA/RNA and avoiding chromosomal lesions. The sequence is that of dITP/XTP pyrophosphatase from Prochlorococcus marinus (strain MIT 9313).